Reading from the N-terminus, the 131-residue chain is Glycine cleavage system H protein (131 aa).

In terms of domain architecture, Lipoyl-binding spans 24-106 (RVTVGISDHA…YGEGWIFVVE (83 aa)). Lysine 65 is modified (N6-lipoyllysine).

It belongs to the GcvH family. In terms of assembly, the glycine cleavage system is composed of four proteins: P, T, L and H. (R)-lipoate serves as cofactor.

In terms of biological role, the glycine cleavage system catalyzes the degradation of glycine. The H protein shuttles the methylamine group of glycine from the P protein to the T protein. The chain is Glycine cleavage system H protein from Xanthomonas oryzae pv. oryzae (strain MAFF 311018).